The primary structure comprises 494 residues: Alpha-amylase (494 aa).

An N-terminal signal peptide occupies residues 1 to 26 (MQISKAALLASLAALVYAQPVTLFKR). Cysteines 57 and 65 form a disulfide. Trp110 serves as a coordination point for substrate. Asn148 lines the Ca(2+) pocket. A substrate-binding site is contributed by His149. Cys177 and Cys191 form a disulfide bridge. Position 202 (Asp202) interacts with Ca(2+). Asn224 is a glycosylation site (N-linked (GlcNAc...) asparagine). Arg231 is a binding site for substrate. 3 residues coordinate Ca(2+): Asp233, His237, and Glu257. Asp233 serves as the catalytic Nucleophile. 236–237 (KH) contributes to the substrate binding site. Glu257 acts as the Proton donor in catalysis. Gly261 serves as a coordination point for substrate. Residues Cys267 and Cys310 are joined by a disulfide bond. The substrate site is built by Asp324 and Arg371. Cysteines 462 and 493 form a disulfide.

Belongs to the glycosyl hydrolase 13 family. The cofactor is Ca(2+).

The protein localises to the secreted. It carries out the reaction Endohydrolysis of (1-&gt;4)-alpha-D-glucosidic linkages in polysaccharides containing three or more (1-&gt;4)-alpha-linked D-glucose units.. This Saccharomycopsis fibuligera (Yeast) protein is Alpha-amylase (ALP1).